Consider the following 110-residue polypeptide: MLPFKTLALFLLTAVAEIVGCYLPWLWLRQGRSAWLLVPAAASLALFAWLLTLHPAATGRVYAAYGGVYVAVALVWLWTVDGVRPGPWDWLGVSVTLCGMAIIAFAPRGG.

4 consecutive transmembrane segments (helical) span residues Leu7–Trp27, Ser33–Leu53, Ala63–Val83, and Gly86–Ala106.

It belongs to the UPF0060 family.

It is found in the cell inner membrane. The sequence is that of UPF0060 membrane protein Dtpsy_1668 from Acidovorax ebreus (strain TPSY) (Diaphorobacter sp. (strain TPSY)).